The primary structure comprises 411 residues: Solute carrier RCH1 (411 aa).

Residues 1 to 17 (MSLETFRESKAYKWTSK) lie on the Cytoplasmic side of the membrane. A helical membrane pass occupies residues 18-38 (VISFLIGQWFFIFLGVFIALA). Topologically, residues 39 to 52 (HSYPEFAKQGGTIR) are extracellular. A helical membrane pass occupies residues 53–73 (AEYSIGYGAVAVIFLISGLSM). The Cytoplasmic portion of the chain corresponds to 74–89 (STKQLLVNVANWRAHF). The helical transmembrane segment at 90-110 (TVLSMSFLVTSAIIYGIASGI) threads the bilayer. Over 111-120 (KASHNGQIDD) the chain is Extracellular. The chain crosses the membrane as a helical span at residues 121 to 141 (WLLIGLIVTHACPTTVSSNVV). The Cytoplasmic segment spans residues 142–150 (MTKQAHGND). A helical membrane pass occupies residues 151-171 (ILTLCEVFIGNVLGAFITPAL). Over 172–204 (LQMYMRGTWEIGNPSHQTQGDSTVQELYAHTMK) the chain is Extracellular. Residues 205–225 (QLGLSVFVPLFVGQVVQNIFP) form a helical membrane-spanning segment. The Cytoplasmic segment spans residues 226-242 (KQTKWCLTTFKLNKVGS). A helical transmembrane segment spans residues 243–263 (FMLLLIMFQSFSTAFAQHAFT). Over 264 to 269 (SVSHAS) the chain is Extracellular. A helical membrane pass occupies residues 270–290 (IIFLVFFNIGIYLFFTVLTFF). The Cytoplasmic portion of the chain corresponds to 291–329 (YSRPFWILRVFKEEPNESSSKLYRYSYAFFRPFYYNRKD). Residues 330–350 (TVAVMLCGPAKTAALGVSLVS) traverse the membrane as a helical segment. The Extracellular segment spans residues 351-361 (SQYGSHNPKLG). A helical transmembrane segment spans residues 362–382 (IILVPLVLYQAEQVMTANVLV). The Cytoplasmic segment spans residues 383 to 411 (SFMRKWIHAEDKVPEDEETSVGSDNDPKK).

Belongs to the bile acid:sodium symporter (BASS) (TC 2.A.28) family.

Its subcellular location is the cell membrane. The protein localises to the bud neck. Its function is as follows. Solute carrier protein that negatively regulates the cytosolic homeostasis in response to high levels of extracellular calcium. The sequence is that of Solute carrier RCH1 from Candida albicans (strain SC5314 / ATCC MYA-2876) (Yeast).